The chain runs to 268 residues: Thiazole synthase (268 aa).

Catalysis depends on Lys96, which acts as the Schiff-base intermediate with DXP. 1-deoxy-D-xylulose 5-phosphate is bound by residues Gly157, 185-186, and 207-208; these read AG and NT. The interval 238–268 is disordered; it reads PMRPREAASPSSPVEGVPFTPTGPRPGRGPQ. Over residues 258 to 268 the composition is skewed to pro residues; it reads PTGPRPGRGPQ.

This sequence belongs to the ThiG family. Homotetramer. Forms heterodimers with either ThiH or ThiS.

The protein resides in the cytoplasm. The enzyme catalyses [ThiS sulfur-carrier protein]-C-terminal-Gly-aminoethanethioate + 2-iminoacetate + 1-deoxy-D-xylulose 5-phosphate = [ThiS sulfur-carrier protein]-C-terminal Gly-Gly + 2-[(2R,5Z)-2-carboxy-4-methylthiazol-5(2H)-ylidene]ethyl phosphate + 2 H2O + H(+). The protein operates within cofactor biosynthesis; thiamine diphosphate biosynthesis. In terms of biological role, catalyzes the rearrangement of 1-deoxy-D-xylulose 5-phosphate (DXP) to produce the thiazole phosphate moiety of thiamine. Sulfur is provided by the thiocarboxylate moiety of the carrier protein ThiS. In vitro, sulfur can be provided by H(2)S. This chain is Thiazole synthase, found in Thermus thermophilus (strain ATCC 27634 / DSM 579 / HB8).